Consider the following 473-residue polypeptide: Vasculin-like protein 1 (473 aa).

A compositionally biased stretch (polar residues) spans 14–25; the sequence is STPQSSKSSTAT. The disordered stretch occupies residues 14–55; it reads STPQSSKSSTATFDKHGEHLSRGEGRFGISRRRHNSSDGFFN. The span at 26–38 shows a compositional bias: basic and acidic residues; sequence FDKHGEHLSRGEG. Ser-49 and Ser-76 each carry phosphoserine. Disordered stretches follow at residues 88 to 127 and 155 to 189; these read GTTG…RKGC and DFPS…AKQP. Positions 103–112 are enriched in polar residues; it reads SQRSGGSSTG. A compositionally biased stretch (basic residues) spans 113-125; that stretch reads NHRHWNGSFHSRK. A Phosphoserine modification is found at Ser-199. Disordered stretches follow at residues 235-267 and 281-316; these read LVPK…SRES and LAAG…RRTT. Ser-289 is subject to Phosphoserine. Positions 292–309 are enriched in low complexity; sequence ESPSSTTPPIEISSSRLT. A Phosphothreonine modification is found at Thr-298. Ser-381 is subject to Phosphoserine. A disordered region spans residues 453-473; the sequence is ECEDSDSETSSSQTSDDDAWK.

It belongs to the vasculin family.

It localises to the nucleus. Its function is as follows. Possible transcription factor. This Mus musculus (Mouse) protein is Vasculin-like protein 1 (Gpbp1l1).